A 225-amino-acid chain; its full sequence is Small ribosomal subunit protein uS7 (225 aa).

Position 2 is an N-acetylserine (S2). T27 is subject to Phosphothreonine. Residues K45 and K203 each participate in a glycyl lysine isopeptide (Lys-Gly) (interchain with G-Cter in ubiquitin) cross-link.

The protein belongs to the universal ribosomal protein uS7 family. As to quaternary structure, component of the small ribosomal subunit (SSU). Mature yeast ribosomes consist of a small (40S) and a large (60S) subunit. The 40S small subunit contains 1 molecule of ribosomal RNA (18S rRNA) and 33 different proteins (encoded by 57 genes). The large 60S subunit contains 3 rRNA molecules (25S, 5.8S and 5S rRNA) and 46 different proteins (encoded by 81 genes). In terms of processing, N-terminally acetylated by acetyltransferase NatA.

The protein resides in the cytoplasm. Functionally, component of the ribosome, a large ribonucleoprotein complex responsible for the synthesis of proteins in the cell. The small ribosomal subunit (SSU) binds messenger RNAs (mRNAs) and translates the encoded message by selecting cognate aminoacyl-transfer RNA (tRNA) molecules. The large subunit (LSU) contains the ribosomal catalytic site termed the peptidyl transferase center (PTC), which catalyzes the formation of peptide bonds, thereby polymerizing the amino acids delivered by tRNAs into a polypeptide chain. The nascent polypeptides leave the ribosome through a tunnel in the LSU and interact with protein factors that function in enzymatic processing, targeting, and the membrane insertion of nascent chains at the exit of the ribosomal tunnel. In Saccharomyces cerevisiae (strain ATCC 204508 / S288c) (Baker's yeast), this protein is Small ribosomal subunit protein uS7.